The chain runs to 357 residues: Holliday junction branch migration complex subunit RuvB (357 aa).

Positions 1–10 (MAIQSDSLSS) are enriched in polar residues. Residues 1-30 (MAIQSDSLSSRPDAPRLVAPAPASPNEESI) are disordered. The segment at 5-195 (SDSLSSRPDA…FGIVSRLEFY (191 aa)) is large ATPase domain (RuvB-L). ATP-binding positions include Leu-34, Arg-35, Gly-76, Lys-79, Thr-80, Thr-81, 142-144 (EDF), Arg-185, Tyr-195, and Arg-232. Thr-80 serves as a coordination point for Mg(2+). Residues 196-266 (NTDDLAHIVT…AANQALAMLE (71 aa)) form a small ATPAse domain (RuvB-S) region. Positions 269–357 (PQGLDLMDRK…QPSSGDLFGA (89 aa)) are head domain (RuvB-H). DNA contacts are provided by Arg-305, Arg-324, and Arg-329.

This sequence belongs to the RuvB family. In terms of assembly, homohexamer. Forms an RuvA(8)-RuvB(12)-Holliday junction (HJ) complex. HJ DNA is sandwiched between 2 RuvA tetramers; dsDNA enters through RuvA and exits via RuvB. An RuvB hexamer assembles on each DNA strand where it exits the tetramer. Each RuvB hexamer is contacted by two RuvA subunits (via domain III) on 2 adjacent RuvB subunits; this complex drives branch migration. In the full resolvosome a probable DNA-RuvA(4)-RuvB(12)-RuvC(2) complex forms which resolves the HJ.

It is found in the cytoplasm. It carries out the reaction ATP + H2O = ADP + phosphate + H(+). Functionally, the RuvA-RuvB-RuvC complex processes Holliday junction (HJ) DNA during genetic recombination and DNA repair, while the RuvA-RuvB complex plays an important role in the rescue of blocked DNA replication forks via replication fork reversal (RFR). RuvA specifically binds to HJ cruciform DNA, conferring on it an open structure. The RuvB hexamer acts as an ATP-dependent pump, pulling dsDNA into and through the RuvAB complex. RuvB forms 2 homohexamers on either side of HJ DNA bound by 1 or 2 RuvA tetramers; 4 subunits per hexamer contact DNA at a time. Coordinated motions by a converter formed by DNA-disengaged RuvB subunits stimulates ATP hydrolysis and nucleotide exchange. Immobilization of the converter enables RuvB to convert the ATP-contained energy into a lever motion, pulling 2 nucleotides of DNA out of the RuvA tetramer per ATP hydrolyzed, thus driving DNA branch migration. The RuvB motors rotate together with the DNA substrate, which together with the progressing nucleotide cycle form the mechanistic basis for DNA recombination by continuous HJ branch migration. Branch migration allows RuvC to scan DNA until it finds its consensus sequence, where it cleaves and resolves cruciform DNA. This is Holliday junction branch migration complex subunit RuvB from Bordetella avium (strain 197N).